The chain runs to 149 residues: Calmodulin (149 aa).

EF-hand domains are found at residues 8 to 43 (EQISEFKEAFSLFDKDGDGTITTKELGTVMRSLGQN), 44 to 79 (PTEAELQDMINEVDQDGSGTIDFPEFLTLMARKMQD), 81 to 116 (DSEEEIKEAFRVFDKDGNGFISAAELRHIMTNLGEK), and 117 to 149 (LTDEEVDEMIREADVDGDGQINYEEFVKMMMSK). Positions 21, 23, 25, 27, 32, 57, 59, 61, 63, 68, 94, 96, 98, and 105 each coordinate Ca(2+). N6,N6,N6-trimethyllysine is present on K116. The Ca(2+) site is built by D130, D132, D134, Q136, and E141.

This sequence belongs to the calmodulin family.

Its function is as follows. Calmodulin mediates the control of a large number of enzymes, ion channels and other proteins by Ca(2+). Among the enzymes to be stimulated by the calmodulin-Ca(2+) complex are a number of protein kinases and phosphatases. The sequence is that of Calmodulin from Trypanosoma brucei brucei.